The sequence spans 447 residues: Trigger factor (447 aa).

Positions 164–249 (GNQVTFDFEG…VKLVEKSKLP (86 aa)) constitute a PPIase FKBP-type domain.

Belongs to the FKBP-type PPIase family. Tig subfamily.

It is found in the cytoplasm. The catalysed reaction is [protein]-peptidylproline (omega=180) = [protein]-peptidylproline (omega=0). Involved in protein export. Acts as a chaperone by maintaining the newly synthesized protein in an open conformation. Functions as a peptidyl-prolyl cis-trans isomerase. This is Trigger factor from Psychrobacter arcticus (strain DSM 17307 / VKM B-2377 / 273-4).